The primary structure comprises 300 residues: Mitochondrial tricarboxylate transporter 1 (300 aa).

Solcar repeat units follow at residues 8–98, 107–197, and 209–294; these read VSPS…FRSM, LSNS…LRDW, and INWL…VVWL. 6 helical membrane-spanning segments follow: residues 11–31, 67–87, 114–134, 172–191, 208–228, and 277–297; these read SVSVVAGATAGAVEGVATFPI, PKGLFRGCTAMVVGNAGKAGV, LAGMGAGTLEAIFAVTPSETI, GVVPVVMRQGSASAIRLGTY, LINWLATFSIGAASGVVAVYG, and LIVSGGVIFSVYEQVVWLLAG.

This sequence belongs to the mitochondrial carrier (TC 2.A.29) family.

The protein localises to the mitochondrion membrane. In terms of biological role, mitochondrial tricarboxylate transporter; part of the gene cluster that mediates the biosynthesis of itaconic acid and 2-hydroxyparaconate. Cis-aconitate is secreted by the mitochondrial tricarboxylate transporter MTT1. In the cytosol cis-aconitate is converted into trans-aconitate via isomerization by the aconitate-delta-isomerase ADI1. Decarboxylation of trans-aconitate by the trans-aconitate decarboxylase TAD1 then leads then to the production of itaconic acid. The cytochrome P450 monooxygenase CYP3 further converts itaconate to 2-hydroxyparaconate via oxidation of the double bond, leading to a transient epoxide, which can subsequently be lactonized to produce 2-hydroxyparaconate. Secretion of itaconate and possibly 2-hydroxyparaconate into the medium is mediated by the major facilitator ITP1. The glyoxalase domain-containing protein RDO1 is not involved in the biosynthesis of itaconate and 2-hydroxyparaconate, however, it might play a role in the further conversion of 2-hydroxyparaconate to itatartarate. This is Mitochondrial tricarboxylate transporter 1 from Mycosarcoma maydis (Corn smut fungus).